The following is a 358-amino-acid chain: Pituitary-specific positive transcription factor 1 (358 aa).

The 9aaTAD motif lies at 5-12 (AFSADSFT). Residues 164 to 195 (PAVLSEEPPLGGTKDLRLRSRPPDDPPDMDSP) form a disordered region. Basic and acidic residues predominate over residues 177–187 (KDLRLRSRPPD). The POU-specific domain maps to 192 to 266 (MDSPQIRELE…ILAKWLDEAE (75 aa)). Residues 282 to 341 (KRKRRTTISLGAKEALERSFGEKIKPSSQEIVRMAEGLHLEKEVVRVWFCNRRQREKRVK) constitute a DNA-binding region (homeobox).

The protein belongs to the POU transcription factor family. Class-1 subfamily.

Its subcellular location is the nucleus. Transcription factor that activates growth hormone and prolactin genes. Specifically binds to the consensus sequence 5'-TAAAT-3'. The chain is Pituitary-specific positive transcription factor 1 (pou1f1) from Oncorhynchus mykiss (Rainbow trout).